We begin with the raw amino-acid sequence, 171 residues long: uncharacterized protein (171 aa).

Disordered regions lie at residues 1-41 (MDAV…SKPK) and 114-147 (DSLGNTASSSSMDPAKGVPSQSGPPEGLGLRPKR). A compositionally biased stretch (low complexity) spans 27 to 38 (AQQQQGPSAQGS). A compositionally biased stretch (polar residues) spans 116–125 (LGNTASSSSM).

This is an uncharacterized protein from Mus musculus (Mouse).